The primary structure comprises 505 residues: Lysine--tRNA ligase (505 aa).

The Mg(2+) site is built by Glu-415 and Glu-422.

Belongs to the class-II aminoacyl-tRNA synthetase family. As to quaternary structure, homodimer. Mg(2+) serves as cofactor.

The protein localises to the cytoplasm. The enzyme catalyses tRNA(Lys) + L-lysine + ATP = L-lysyl-tRNA(Lys) + AMP + diphosphate. In Shigella flexneri, this protein is Lysine--tRNA ligase.